Reading from the N-terminus, the 764-residue chain is Probable 5-methyltetrahydropteroyltriglutamate--homocysteine methyltransferase (764 aa).

Residues K19 and N126 each coordinate 5-methyltetrahydropteroyltri-L-glutamate. Phosphoserine is present on S182. Residue T441 is modified to Phosphothreonine. L-homocysteine contacts are provided by residues 442–444 and E495; that span reads IGS. L-methionine-binding positions include 442–444 and E495; that span reads IGS. Residues D500, Y523, 526-527, and W572 contribute to the 5-methyltetrahydropteroyltri-L-glutamate site; that span reads RC. D610 serves as a coordination point for L-homocysteine. Residue D610 participates in L-methionine binding. 3 residues coordinate Zn(2+): H652, C654, and E676. Catalysis depends on H703, which acts as the Proton donor. Residue C735 participates in Zn(2+) binding.

The protein belongs to the vitamin-B12 independent methionine synthase family. The cofactor is Zn(2+).

The protein resides in the nucleus. It localises to the cytoplasm. It carries out the reaction 5-methyltetrahydropteroyltri-L-glutamate + L-homocysteine = tetrahydropteroyltri-L-glutamate + L-methionine. The protein operates within amino-acid biosynthesis; L-methionine biosynthesis via de novo pathway; L-methionine from L-homocysteine (MetE route): step 1/1. In terms of biological role, catalyzes the transfer of a methyl group from 5-methyltetrahydrofolate to homocysteine resulting in methionine formation. The chain is Probable 5-methyltetrahydropteroyltriglutamate--homocysteine methyltransferase (met26) from Schizosaccharomyces pombe (strain 972 / ATCC 24843) (Fission yeast).